The primary structure comprises 167 residues: MAVNDCFSLTYPHNPHPGDLIEVFRPCYQHWALYLGDGYVINIAPIDGIRSSFTSAKSVFSTKALVKMQLLKDVVGNDTYRINNKYDTTYPPLPVEEVIQRSEFPIGQEVAYDLLVNNCEHFVTLLRYGEGVSEQANRAIGTIGLVAAGIDIFTFLGLFPKRQRTKY.

The Cytoplasmic segment spans residues 1 to 138 (MAVNDCFSLT…GEGVSEQANR (138 aa)). In terms of domain architecture, LRAT spans 20–135 (LIEVFRPCYQ…LRYGEGVSEQ (116 aa)). Residue His-30 is part of the active site. Catalysis depends on Cys-119, which acts as the Acyl-thioester intermediate. Residues 139–159 (AIGTIGLVAAGIDIFTFLGLF) traverse the membrane as a helical segment. At 160–167 (PKRQRTKY) the chain is on the lumenal side.

This sequence belongs to the H-rev107 family. As to expression, expressed in skeletal muscle, heart, brain, bone marrow and testis. Abundantly expressed in brain, heart, and skeletal muscle.

Its subcellular location is the membrane. The protein resides in the cytoplasm. The protein localises to the nucleus. It carries out the reaction a 1,2-diacyl-sn-glycero-3-phosphocholine + H2O = a 1-acyl-sn-glycero-3-phosphocholine + a fatty acid + H(+). The catalysed reaction is a 1,2-diacyl-sn-glycero-3-phosphocholine + H2O = a 2-acyl-sn-glycero-3-phosphocholine + a fatty acid + H(+). The enzyme catalyses 1,2-dihexadecanoyl-sn-glycero-3-phosphocholine + H2O = 2-hexadecanoyl-sn-glycero-3-phosphocholine + hexadecanoate + H(+). It catalyses the reaction 1,2-dihexadecanoyl-sn-glycero-3-phosphocholine + H2O = 1-hexadecanoyl-sn-glycero-3-phosphocholine + hexadecanoate + H(+). It carries out the reaction 1-hexadecanoyl-2-(5Z,8Z,11Z,14Z-eicosatetraenoyl)-sn-glycero-3-phosphoethanolamine + H2O = 2-(5Z,8Z,11Z,14Z)-eicosatetraenoyl-sn-glycero-3-phosphoethanolamine + hexadecanoate + H(+). The catalysed reaction is 1-hexadecanoyl-2-(5Z,8Z,11Z,14Z-eicosatetraenoyl)-sn-glycero-3-phosphoethanolamine + H2O = 1-hexadecanoyl-sn-glycero-3-phosphoethanolamine + (5Z,8Z,11Z,14Z)-eicosatetraenoate + H(+). The enzyme catalyses 1,2-di-(9Z-octadecenoyl)-sn-glycero-3-phosphoethanolamine + 1,2-dihexadecanoyl-sn-glycero-3-phosphocholine = hexadecanoyl-sn-glycero-3-phosphocholine + N-hexadecanoyl-1,2-di-(9Z-octadecenoyl)-sn-glycero-3-phosphoethanolamine + H(+). It catalyses the reaction 1,2-dihexadecanoyl-sn-glycero-3-phosphocholine + a 2-acyl-sn-glycero-3-phosphocholine = a 1-hexadecanoyl-2-acyl-sn-glycero-3-phosphocholine + 2-hexadecanoyl-sn-glycero-3-phosphocholine. Its function is as follows. Exhibits both phospholipase A1/2 and acyltransferase activities. Shows phospholipase A1 (PLA1) and A2 (PLA2) activity, catalyzing the calcium-independent release of fatty acids from the sn-1 or sn-2 position of glycerophospholipids. Shows O-acyltransferase activity, catalyzing the transfer of a fatty acyl group from glycerophospholipid to the hydroxyl group of lysophospholipid. Shows N-acyltransferase activity, catalyzing the calcium-independent transfer of a fatty acyl group at the sn-1 position of phosphatidylcholine (PC) and other glycerophospholipids to the primary amine of phosphatidylethanolamine (PE), forming N-acylphosphatidylethanolamine (NAPE), which serves as precursor for N-acylethanolamines (NAEs). In Mus musculus (Mouse), this protein is Phospholipase A and acyltransferase 1.